Reading from the N-terminus, the 286-residue chain is 4-diphosphocytidyl-2-C-methyl-D-erythritol kinase (286 aa).

Residue lysine 13 is part of the active site. 101-111 (PQGAGLGGGSS) contributes to the ATP binding site. Aspartate 143 is an active-site residue.

The protein belongs to the GHMP kinase family. IspE subfamily.

It catalyses the reaction 4-CDP-2-C-methyl-D-erythritol + ATP = 4-CDP-2-C-methyl-D-erythritol 2-phosphate + ADP + H(+). The protein operates within isoprenoid biosynthesis; isopentenyl diphosphate biosynthesis via DXP pathway; isopentenyl diphosphate from 1-deoxy-D-xylulose 5-phosphate: step 3/6. Functionally, catalyzes the phosphorylation of the position 2 hydroxy group of 4-diphosphocytidyl-2C-methyl-D-erythritol. The protein is 4-diphosphocytidyl-2-C-methyl-D-erythritol kinase of Idiomarina loihiensis (strain ATCC BAA-735 / DSM 15497 / L2-TR).